The primary structure comprises 382 residues: Caspase-1-B (382 aa).

A propeptide spanning residues 1–98 (MTAQLNKVRK…HEHAPSPIQE (98 aa)) is cleaved from the precursor. Active-site residues include H216 and C270. Positions 283–292 (DVAPAPLEDD) are excised as a propeptide.

Belongs to the peptidase C14A family. In terms of assembly, heterotetramer that consists of two anti-parallel arranged heterodimers, each one formed by a 20 kDa (Caspase-1 subunit p20) and a 10 kDa (Caspase-1 subunit p10) subunit. As to quaternary structure, heterotetramer that consists of two anti-parallel arranged heterodimers, each one formed by a 20 kDa (Caspase-1 subunit p20) and a 10 kDa (Caspase-1 subunit p10) subunit. Can form a heterodimer with isoform epsilon which then has an inhibitory effect. Post-translationally, the two subunits are derived from the precursor sequence by an autocatalytic mechanism.

The protein localises to the cytoplasm. Its subcellular location is the cell membrane. It carries out the reaction Strict requirement for an Asp residue at position P1 and has a preferred cleavage sequence of Tyr-Val-Ala-Asp-|-.. Functionally, thiol protease involved in a variety of inflammatory processes by proteolytically cleaving other proteins, such as the precursors of the inflammatory cytokines interleukin-1 beta (IL1B) and interleukin 18 (IL18) as well as the pyroptosis inducer Gasdermin-D (GSDMD), into active mature peptides. Plays a key role in cell immunity as an inflammatory response initiator: once activated through formation of an inflammasome complex, it initiates a pro-inflammatory response through the cleavage of the two inflammatory cytokines IL1B and IL18, releasing the mature cytokines which are involved in a variety of inflammatory processes. Cleaves a tetrapeptide after an Asp residue at position P1. Also initiates pyroptosis, a programmed lytic cell death pathway, through cleavage of GSDMD. The polypeptide is Caspase-1-B (casp1-b) (Xenopus laevis (African clawed frog)).